Consider the following 351-residue polypeptide: Anthranilate phosphoribosyltransferase (351 aa).

5-phospho-alpha-D-ribose 1-diphosphate-binding positions include G80, 83 to 84 (GD), T88, 90 to 93 (NIST), 108 to 116 (KHGNRSVTS), and S120. G80 provides a ligand contact to anthranilate. Position 92 (S92) interacts with Mg(2+). Residue N111 participates in anthranilate binding. An anthranilate-binding site is contributed by R166. Residues D229 and E230 each coordinate Mg(2+).

The protein belongs to the anthranilate phosphoribosyltransferase family. Homodimer. It depends on Mg(2+) as a cofactor.

It carries out the reaction N-(5-phospho-beta-D-ribosyl)anthranilate + diphosphate = 5-phospho-alpha-D-ribose 1-diphosphate + anthranilate. It functions in the pathway amino-acid biosynthesis; L-tryptophan biosynthesis; L-tryptophan from chorismate: step 2/5. In terms of biological role, catalyzes the transfer of the phosphoribosyl group of 5-phosphorylribose-1-pyrophosphate (PRPP) to anthranilate to yield N-(5'-phosphoribosyl)-anthranilate (PRA). This is Anthranilate phosphoribosyltransferase from Pelodictyon phaeoclathratiforme (strain DSM 5477 / BU-1).